Reading from the N-terminus, the 383-residue chain is MLYQIFYPLRESFFGFNLFRYITFRTAGAVATALILVILFAPGVIEKLKKLHFGQVVRDDGPETHLVKTGTPTMGGIFIVGSILISVLLWAELDNLKIILLTLSLVILSIAGFLDDFLKIKYKNSKGLPGIYKIFFQTFVGIIIGVYLYYFDKSTFLMTFELNQGIGVLEAVKVAQVPSSTIFLPFASTIYIDLKILYIPFATFVVVSMSNAVNLTDGLDGLAIGLLIIMSMALAVLSYVSGNSLIATYLKIPFISDAGEVTVFVGALIGAGLGFLWFNAHPAQVFMGDVGSLSLGGVLGIIALFIKHELLLVIIGAVYVAEALSVVLQVFSYKFFNKKRIFKMAPLHHHFEKSGWKETQVVFRFYIIGIIMALIGIATLKIR.

Transmembrane regions (helical) follow at residues 26 to 46 (TAGA…GVIE), 73 to 93 (TMGG…WAEL), 98 to 118 (IILL…DDFL), 131 to 151 (IYKI…LYYF), 182 to 202 (IFLP…IPFA), 221 to 241 (GLAI…SYVS), 258 to 278 (AGEV…FLWF), 283 to 305 (AQVF…IALF), and 360 to 380 (QVVF…IATL).

Belongs to the glycosyltransferase 4 family. MraY subfamily. The cofactor is Mg(2+).

The protein localises to the cell inner membrane. The catalysed reaction is UDP-N-acetyl-alpha-D-muramoyl-L-alanyl-gamma-D-glutamyl-meso-2,6-diaminopimeloyl-D-alanyl-D-alanine + di-trans,octa-cis-undecaprenyl phosphate = di-trans,octa-cis-undecaprenyl diphospho-N-acetyl-alpha-D-muramoyl-L-alanyl-D-glutamyl-meso-2,6-diaminopimeloyl-D-alanyl-D-alanine + UMP. It functions in the pathway cell wall biogenesis; peptidoglycan biosynthesis. Catalyzes the initial step of the lipid cycle reactions in the biosynthesis of the cell wall peptidoglycan: transfers peptidoglycan precursor phospho-MurNAc-pentapeptide from UDP-MurNAc-pentapeptide onto the lipid carrier undecaprenyl phosphate, yielding undecaprenyl-pyrophosphoryl-MurNAc-pentapeptide, known as lipid I. The protein is Phospho-N-acetylmuramoyl-pentapeptide-transferase of Brachyspira hyodysenteriae (strain ATCC 49526 / WA1).